The chain runs to 253 residues: Complement C1q subcomponent subunit B (253 aa).

The N-terminal stretch at 1–25 (MKTQWSEILTPLLLLLLGLLHVSWA) is a signal peptide. Pyrrolidone carboxylic acid is present on Gln26. Residues 29-112 (CTGSPGIPGV…GPRGPKGGSG (84 aa)) enclose the Collagen-like domain. The interval 29–114 (CTGSPGIPGV…RGPKGGSGDY (86 aa)) is disordered. 4-hydroxyproline occurs at positions 33, 36, 39, 51, and 54. Lys57 and Lys60 each carry 5-hydroxylysine. Pro63 is subject to 4-hydroxyproline. A compositionally biased stretch (basic and acidic residues) spans 68–77 (DHGELGEKGD). The residue at position 75 (Lys75) is a 5-hydroxylysine. Residues 78-96 (AGIPGIPGKVGPKGPVGPK) are compositionally biased toward low complexity. 4-hydroxyproline is present on residues Pro81 and Pro84. 2 positions are modified to 5-hydroxylysine: Lys90 and Lys96. Pro99 and Pro102 each carry 4-hydroxyproline. 5-hydroxylysine is present on Lys108. Residues 115–253 (KATQKVAFSA…GFLLFPDMDV (139 aa)) enclose the C1q domain. A disulfide bridge links Cys179 with Cys198. Residues Asp199, Tyr200, and Gln206 each coordinate Ca(2+).

In terms of assembly, core component of the complement C1 complex, a calcium-dependent complex composed of 1 molecule of the C1Q subcomplex, 2 molecules of C1R and 2 molecules of C1S. The C1Q subcomplex is composed 18 subunits: 3 chains of C1QA, C1QB, and C1QC trimerize to form 6 collagen-like triple helices connected to six globular ligand-recognition modules (C1q domain). Hydroxylated on lysine and proline residues. Hydroxylated lysine residues can be glycosylated. Human C1Q contains up to 68.3 hydroxylysine-galactosylglucose residues and up to 2.5 hydroxylysine-galactose per molecule. Total percentage hydroxylysine residues glycosylated is 86.4%. In terms of tissue distribution, highest levels in spleen, lung and brain. Weaker expression in kidney and liver. In the spleen, localized mainly to the red pulp, in cells mainly of monocyte-macrophage lineage. In white pulp, localized in specific dendritic cells such as those from the periarteriolar lymphatic sheath (PALS).

It is found in the secreted. The protein localises to the cell surface. Its activity is regulated as follows. The C1Q subcomplex is inhibited by sulfated molecules, such as triterpenoid sulfates, heparan sulfate, or chondroitin sulfates. Its function is as follows. Core component of the complement C1 complex, a multiprotein complex that initiates the classical pathway of the complement system, a cascade of proteins that leads to phagocytosis and breakdown of pathogens and signaling that strengthens the adaptive immune system. The classical complement pathway is initiated by the C1Q subcomplex of the C1 complex, which specifically binds IgG or IgM immunoglobulins complexed with antigens, forming antigen-antibody complexes on the surface of pathogens: C1QA, together with C1QB and C1QC, specifically recognizes and binds the Fc regions of IgG or IgM via its C1q domain. Immunoglobulin-binding activates the proenzyme C1R, which cleaves C1S, initiating the proteolytic cascade of the complement system. The C1Q subcomplex is activated by a hexamer of IgG complexed with antigens, while it is activated by a pentameric IgM. The C1Q subcomplex also recognizes and binds phosphatidylserine exposed on the surface of cells undergoing programmed cell death, possibly promoting activation of the complement system. This is Complement C1q subcomponent subunit B from Rattus norvegicus (Rat).